Consider the following 206-residue polypeptide: Transcriptional regulator GfcR (206 aa).

It belongs to the purine/pyrimidine phosphoribosyltransferase family. GfcR subfamily.

In Methanosphaerula palustris (strain ATCC BAA-1556 / DSM 19958 / E1-9c), this protein is Transcriptional regulator GfcR.